The primary structure comprises 124 residues: MKIDGTVTTGLGKAAYFLSQDFYVNNFKKNCGFRPYPGTLNVIVPEEYLPQINKVKNECKNIIKPDEGFGAVKYIKARLNDEVTGAIVFPAKTTHEENYLEFIAKDKLRDKLNLEDGDTVSVEF.

10–15 (GLGKAA) is a CDP binding site. Mg(2+) contacts are provided by Thr39 and Asn41. 2 residues coordinate FMN: Thr93 and Glu101. A CDP-binding site is contributed by 106–109 (DKLR).

It belongs to the archaeal riboflavin kinase family. The cofactor is Mg(2+).

The catalysed reaction is riboflavin + CTP = CDP + FMN + H(+). It participates in cofactor biosynthesis; FMN biosynthesis; FMN from riboflavin (CTP route): step 1/1. Its function is as follows. Catalyzes the CTP-dependent phosphorylation of riboflavin (vitamin B2) to form flavin mononucleotide (FMN). This chain is Riboflavin kinase, found in Methanobrevibacter smithii (strain ATCC 35061 / DSM 861 / OCM 144 / PS).